Reading from the N-terminus, the 256-residue chain is Acetyl-coenzyme A carboxylase carboxyl transferase subunit alpha (256 aa).

Residues 1–236 form the CoA carboxyltransferase C-terminal domain; sequence MSDVARILKE…KTAIVDELAE (236 aa).

Belongs to the AccA family. As to quaternary structure, acetyl-CoA carboxylase is a heterohexamer composed of biotin carboxyl carrier protein (AccB), biotin carboxylase (AccC) and two subunits each of ACCase subunit alpha (AccA) and ACCase subunit beta (AccD).

The protein localises to the cytoplasm. It carries out the reaction N(6)-carboxybiotinyl-L-lysyl-[protein] + acetyl-CoA = N(6)-biotinyl-L-lysyl-[protein] + malonyl-CoA. It functions in the pathway lipid metabolism; malonyl-CoA biosynthesis; malonyl-CoA from acetyl-CoA: step 1/1. Component of the acetyl coenzyme A carboxylase (ACC) complex. First, biotin carboxylase catalyzes the carboxylation of biotin on its carrier protein (BCCP) and then the CO(2) group is transferred by the carboxyltransferase to acetyl-CoA to form malonyl-CoA. The chain is Acetyl-coenzyme A carboxylase carboxyl transferase subunit alpha from Streptococcus thermophilus (strain ATCC BAA-250 / LMG 18311).